A 1207-amino-acid polypeptide reads, in one-letter code: DNA-directed RNA polymerase subunit beta' (1207 aa).

Residues Cys-60, Cys-62, Cys-75, and Cys-78 each contribute to the Zn(2+) site. The Mg(2+) site is built by Asp-450, Asp-452, and Asp-454. Zn(2+) contacts are provided by Cys-818, Cys-892, Cys-899, and Cys-902.

The protein belongs to the RNA polymerase beta' chain family. As to quaternary structure, the RNAP catalytic core consists of 2 alpha, 1 beta, 1 beta' and 1 omega subunit. When a sigma factor is associated with the core the holoenzyme is formed, which can initiate transcription. Mg(2+) serves as cofactor. Zn(2+) is required as a cofactor.

The catalysed reaction is RNA(n) + a ribonucleoside 5'-triphosphate = RNA(n+1) + diphosphate. DNA-dependent RNA polymerase catalyzes the transcription of DNA into RNA using the four ribonucleoside triphosphates as substrates. The sequence is that of DNA-directed RNA polymerase subunit beta' from Lactococcus lactis subsp. cremoris (strain MG1363).